The primary structure comprises 122 residues: Large ribosomal subunit protein uL14 (122 aa).

This sequence belongs to the universal ribosomal protein uL14 family. Part of the 50S ribosomal subunit. Forms a cluster with proteins L3 and L19. In the 70S ribosome, L14 and L19 interact and together make contacts with the 16S rRNA in bridges B5 and B8.

In terms of biological role, binds to 23S rRNA. Forms part of two intersubunit bridges in the 70S ribosome. This chain is Large ribosomal subunit protein uL14, found in Syntrophobacter fumaroxidans (strain DSM 10017 / MPOB).